A 348-amino-acid chain; its full sequence is Dihydroorotase (348 aa).

2 residues coordinate Zn(2+): His17 and His19. Substrate contacts are provided by residues 19 to 21 (HLR) and Asn45. Zn(2+)-binding residues include Lys103, His140, and His178. Lys103 is modified (N6-carboxylysine). His140 contributes to the substrate binding site. Leu223 provides a ligand contact to substrate. Asp251 serves as a coordination point for Zn(2+). Residue Asp251 is part of the active site. Positions 255 and 267 each coordinate substrate.

This sequence belongs to the metallo-dependent hydrolases superfamily. DHOase family. Class II DHOase subfamily. Homodimer. Requires Zn(2+) as cofactor.

It carries out the reaction (S)-dihydroorotate + H2O = N-carbamoyl-L-aspartate + H(+). The protein operates within pyrimidine metabolism; UMP biosynthesis via de novo pathway; (S)-dihydroorotate from bicarbonate: step 3/3. In terms of biological role, catalyzes the reversible cyclization of carbamoyl aspartate to dihydroorotate. The chain is Dihydroorotase from Escherichia coli (strain UTI89 / UPEC).